The chain runs to 271 residues: Norsolorinic acid ketoreductase (271 aa).

Positions 1-22 (MNGSLSQHDQERLSTPYRDGPP) are disordered. 6 residues coordinate NADP(+): isoleucine 36, asparagine 112, tyrosine 185, lysine 189, valine 216, and threonine 218. Residue tyrosine 185 is the Proton donor of the active site. Catalysis depends on lysine 189, which acts as the Lowers pKa of active site Tyr.

This sequence belongs to the short-chain dehydrogenases/reductases (SDR) family.

Its subcellular location is the cytoplasm. The protein localises to the cytosol. The protein resides in the vacuole. The enzyme catalyses (1'S)-averantin + NADP(+) = norsolorinic acid + NADPH + H(+). It functions in the pathway mycotoxin biosynthesis; aflatoxin biosynthesis. Norsolorinic acid ketoreductase; part of the gene cluster that mediates the biosynthesis of aflatoxins, a group of polyketide-derived furanocoumarins, and part of the most toxic and carcinogenic compounds among the known mycotoxins. The four major aflatoxins produced by A.parasiticus are aflatoxin B1 (AFB1), aflatoxin B2 (AFB2), aflatoxin G1 (AFG1) and aflatoxin G2 (AFG2). Within the aflatoxin pathway, the norsolorinic acid ketoreductase aflD performs the second step by catalyzing the dehydration of norsolorinic acid (NOR) to form (1'S)-averantin (AVN). The biosynthesis of aflatoxins begins with the norsolorinic acid synthase aflC that combines a hexanoyl starter unit produced by the fatty acid synthase aflA/aflB and 7 malonyl-CoA extender units to synthesize the precursor NOR. The second step is the conversion of NOR to averantin and requires the norsolorinic acid ketoreductase aflD, which catalyzes the dehydration of norsolorinic acid to form (1'S)-averantin. The norsolorinic acid reductases aflE and aflF may also play a role in the conversion of NOR to AVN. The cytochrome P450 monooxygenase aflG then catalyzes the hydroxylation of AVN to 5'hydroxyaverantin (HAVN). The next step is performed by the 5'-hydroxyaverantin dehydrogenase aflH that transforms HAVN to 5'-oxoaverantin (OAVN) which is further converted to averufin (AVF) by aflK that plays a dual role in the pathway, as a 5'-oxoaverantin cyclase that mediates conversion of 5'-oxoaverantin, as well as a versicolorin B synthase in a later step in the pathway. The averufin oxidase aflI catalyzes the conversion of AVF to versiconal hemiacetal acetate (VHA). VHA is then the substrate for the versiconal hemiacetal acetate esterase aflJ to yield versiconal (VAL). Versicolorin B synthase aflK then converts VAL to versicolorin B (VERB) by closing the bisfuran ring of aflatoxin which is required for DNA-binding, thus giving to aflatoxin its activity as a mutagen. Then, the activity of the versicolorin B desaturase aflL leads to versicolorin A (VERA). A branch point starts from VERB since it can also be converted to dihydrodemethylsterigmatocystin (DMDHST), probably also by aflL, VERA being a precursor for aflatoxins B1 and G1, and DMDHST for aflatoxins B2 and G2. Next, the versicolorin reductase aflM and the cytochrome P450 monooxygenase aflN are involved in conversion of VERA to demethylsterigmatocystin (DMST). AflX and aflY seem also involved in this step, through probable aflX-mediated epoxide ring-opening step following versicolorin A oxidation and aflY-mediated Baeyer-Villiger oxidation required for the formation of the xanthone ring. The methyltransferase aflO then leads to the modification of DMST to sterigmatocystin (ST), and of DMDHST to dihydrosterigmatocystin (DHST). Both ST and DHST are then substrates of the O-methyltransferase aflP to yield O-methylsterigmatocystin (OMST) and dihydro-O-methylsterigmatocystin (DHOMST), respectively. Finally OMST is converted to aflatoxins B1 and G1, and DHOMST to aflatoxins B2 and G2, via the action of several enzymes including O-methylsterigmatocystin oxidoreductase aflQ, the cytochrome P450 monooxygenase aflU, but also the NADH-dependent flavin oxidoreductase nadA which is specifically required for the synthesis of AFG1. This Aspergillus parasiticus (strain ATCC 56775 / NRRL 5862 / SRRC 143 / SU-1) protein is Norsolorinic acid ketoreductase.